A 638-amino-acid polypeptide reads, in one-letter code: Factor of DNA methylation 3 (638 aa).

The stretch at 318–497 (FNRIFADHEK…RALISNLRDM (180 aa)) forms a coiled coil.

Its function is as follows. Acts in association with FDM4 and FDM5 for RNA-directed DNA methylation (RdDM). This chain is Factor of DNA methylation 3, found in Arabidopsis thaliana (Mouse-ear cress).